Here is a 445-residue protein sequence, read N- to C-terminus: UPF0210 protein SPH_0352 (445 aa).

This sequence belongs to the UPF0210 family. As to quaternary structure, homodimer.

This Streptococcus pneumoniae (strain Hungary19A-6) protein is UPF0210 protein SPH_0352.